A 175-amino-acid polypeptide reads, in one-letter code: Centrosomal protein 20 (175 aa).

Residues 1–104 (MATIAELKAV…IVEDANGKSV (104 aa)) are necessary and sufficient for homooligomerization and localization to centrosomes and pericentriolar satellites. Residues 49-81 (ENLLINELIREYLEFNKYKYSASVLTAEAGQPE) enclose the LisH domain. The disordered stretch occupies residues 137–166 (RQNLAKPSTERNQKDRIPEPGRMAGTSIEE). The span at 144-155 (STERNQKDRIPE) shows a compositional bias: basic and acidic residues.

The protein belongs to the CEP43 family. As to quaternary structure, homooligomer; probably required for localization to centrosomes.

It is found in the cell projection. Its subcellular location is the cilium. The protein localises to the cytoplasm. The protein resides in the cytoskeleton. It localises to the cilium basal body. It is found in the microtubule organizing center. Its subcellular location is the centrosome. The protein localises to the cytoplasmic granule. The protein resides in the centriolar satellite. Functionally, involved in the biogenesis of cilia. Required for the recruitment of PLK1 to centrosomes and S phase progression. This is Centrosomal protein 20 (CEP20) from Gallus gallus (Chicken).